The primary structure comprises 127 residues: Protein ApaG (127 aa).

Residues 3 to 127 form the ApaG domain; it reads NERKYSIKVE…FILSVPRVLH (125 aa).

The sequence is that of Protein ApaG from Nitrosomonas europaea (strain ATCC 19718 / CIP 103999 / KCTC 2705 / NBRC 14298).